The sequence spans 132 residues: ATP synthase epsilon chain (132 aa).

It belongs to the ATPase epsilon chain family. F-type ATPases have 2 components, CF(1) - the catalytic core - and CF(0) - the membrane proton channel. CF(1) has five subunits: alpha(3), beta(3), gamma(1), delta(1), epsilon(1). CF(0) has three main subunits: a, b and c.

Its subcellular location is the cell membrane. Functionally, produces ATP from ADP in the presence of a proton gradient across the membrane. This chain is ATP synthase epsilon chain, found in Desulforamulus reducens (strain ATCC BAA-1160 / DSM 100696 / MI-1) (Desulfotomaculum reducens).